Consider the following 186-residue polypeptide: Adenine phosphoribosyltransferase (186 aa).

It belongs to the purine/pyrimidine phosphoribosyltransferase family. In terms of assembly, homodimer.

The protein localises to the cytoplasm. It catalyses the reaction AMP + diphosphate = 5-phospho-alpha-D-ribose 1-diphosphate + adenine. It participates in purine metabolism; AMP biosynthesis via salvage pathway; AMP from adenine: step 1/1. Its function is as follows. Catalyzes a salvage reaction resulting in the formation of AMP, that is energically less costly than de novo synthesis. This is Adenine phosphoribosyltransferase from Xanthomonas campestris pv. campestris (strain B100).